Reading from the N-terminus, the 159-residue chain is RNA pyrophosphohydrolase (159 aa).

The 144-residue stretch at 6-149 (GFRPNVGIIL…KREVYRRALK (144 aa)) folds into the Nudix hydrolase domain. The Nudix box motif lies at 38–59 (GGINPQETPEDALYRELNEEVG).

Belongs to the Nudix hydrolase family. RppH subfamily. A divalent metal cation is required as a cofactor.

Its function is as follows. Accelerates the degradation of transcripts by removing pyrophosphate from the 5'-end of triphosphorylated RNA, leading to a more labile monophosphorylated state that can stimulate subsequent ribonuclease cleavage. The sequence is that of RNA pyrophosphohydrolase from Pseudomonas savastanoi pv. phaseolicola (strain 1448A / Race 6) (Pseudomonas syringae pv. phaseolicola (strain 1448A / Race 6)).